We begin with the raw amino-acid sequence, 118 residues long: U-scoloptoxin(05)-Cw1a (118 aa).

A signal peptide spans 1–22 (MNPLNLSTFIVFTLFAASATTA).

This sequence belongs to the scoloptoxin-05 family. Post-translationally, contains 5 disulfide bonds. Expressed by the venom gland.

The protein resides in the secreted. This Cormocephalus westwoodi (Westwood's green centipede) protein is U-scoloptoxin(05)-Cw1a.